The chain runs to 971 residues: Exportin-2 (971 aa).

Met1 is modified (N-acetylmethionine). The Importin N-terminal domain occupies 29–102 (AEKFLESVEG…KANIVHLMLS (74 aa)). Ser112 carries the phosphoserine modification. Residues Lys574 and Lys824 each carry the N6-acetyllysine modification. Ser931 carries the post-translational modification Phosphoserine.

The protein belongs to the XPO2/CSE1 family. In terms of assembly, found in a complex with CSE1L/XPO2, Ran and KPNA2. Binds with high affinity to importin-alpha only in the presence of RanGTP. The complex is dissociated by the combined action of RanBP1 and RanGAP1. Interacts with CFTR.

The protein localises to the cytoplasm. The protein resides in the nucleus. In terms of biological role, export receptor for importin-alpha. Mediates importin-alpha re-export from the nucleus to the cytoplasm after import substrates (cargos) have been released into the nucleoplasm. In the nucleus binds cooperatively to importin-alpha and to the GTPase Ran in its active GTP-bound form. Docking of this trimeric complex to the nuclear pore complex (NPC) is mediated through binding to nucleoporins. Upon transit of a nuclear export complex into the cytoplasm, disassembling of the complex and hydrolysis of Ran-GTP to Ran-GDP (induced by RANBP1 and RANGAP1, respectively) cause release of the importin-alpha from the export receptor. CSE1L/XPO2 then return to the nuclear compartment and mediate another round of transport. The directionality of nuclear export is thought to be conferred by an asymmetric distribution of the GTP- and GDP-bound forms of Ran between the cytoplasm and nucleus. In Pongo abelii (Sumatran orangutan), this protein is Exportin-2 (CSE1L).